The chain runs to 637 residues: Glutathione hydrolase 3 (637 aa).

The helical transmembrane segment at 28 to 48 (LKISLLLLLILLATSGYYSFS) threads the bilayer. Asn50 is a glycosylation site (N-linked (GlcNAc...) asparagine). L-glutamate is bound at residue Arg147. Residues Asn271, Asn374, and Asn398 are each glycosylated (N-linked (GlcNAc...) asparagine). The active-site Nucleophile is the Thr418. L-glutamate-binding positions include Thr436, Asn438, Glu457, Asp460, 488–489 (SS), and 509–510 (GG). Asn553 carries an N-linked (GlcNAc...) asparagine glycan.

This sequence belongs to the gamma-glutamyltransferase family. As to expression, expressed in roots, cotyledons, leaves, flowers and siliques.

The protein resides in the vacuole membrane. The catalysed reaction is an N-terminal (5-L-glutamyl)-[peptide] + an alpha-amino acid = 5-L-glutamyl amino acid + an N-terminal L-alpha-aminoacyl-[peptide]. The enzyme catalyses glutathione + H2O = L-cysteinylglycine + L-glutamate. It catalyses the reaction an S-substituted glutathione + H2O = an S-substituted L-cysteinylglycine + L-glutamate. It functions in the pathway sulfur metabolism; glutathione metabolism. Its function is as follows. May play a role in protecting plants from some xenobiotic chemicals by degrading vacuolar glutathione conjugates into cysteine conjugates. This chain is Glutathione hydrolase 3 (GGT3), found in Arabidopsis thaliana (Mouse-ear cress).